The primary structure comprises 48 residues: Osteocalcin (48 aa).

Residues 1-44 (AGTAPADLTVAQLESLKEVCEANLACEHMMDVSGIIAAYTAYYG) form the Gla domain. The Ca(2+) site is built by Glu14, Glu18, Glu21, and Glu27. 3 positions are modified to 4-carboxyglutamate: Glu14, Glu18, and Glu21. Cys20 and Cys26 form a disulfide bridge.

This sequence belongs to the osteocalcin/matrix Gla protein family. Gamma-carboxyglutamate residues are formed by vitamin K dependent carboxylation by GGCX. These residues are essential for the binding of calcium.

It is found in the secreted. It localises to the extracellular space. The protein localises to the extracellular matrix. In terms of biological role, the carboxylated form is one of the main organic components of the bone matrix, which constitutes 1-2% of the total bone protein. The carboxylated form binds strongly to apatite and calcium. The chain is Osteocalcin (bglap) from Cyprinus carpio (Common carp).